We begin with the raw amino-acid sequence, 49 residues long: Large ribosomal subunit protein bL33B (49 aa).

This sequence belongs to the bacterial ribosomal protein bL33 family.

In Shouchella clausii (strain KSM-K16) (Alkalihalobacillus clausii), this protein is Large ribosomal subunit protein bL33B.